The primary structure comprises 466 residues: Ribulose bisphosphate carboxylase large chain (466 aa).

At Lys-5 the chain carries N6,N6,N6-trimethyllysine. Substrate is bound by residues Asn-114 and Thr-164. Residue Lys-166 is the Proton acceptor of the active site. Residue Lys-168 coordinates substrate. 3 residues coordinate Mg(2+): Lys-192, Asp-194, and Glu-195. At Lys-192 the chain carries N6-carboxylysine. His-285 acts as the Proton acceptor in catalysis. Substrate-binding residues include Arg-286, His-318, and Ser-370.

The protein belongs to the RuBisCO large chain family. Type I subfamily. As to quaternary structure, heterohexadecamer of 8 large chains and 8 small chains; disulfide-linked. The disulfide link is formed within the large subunit homodimers. The cofactor is Mg(2+). Post-translationally, the disulfide bond which can form in the large chain dimeric partners within the hexadecamer appears to be associated with oxidative stress and protein turnover.

It is found in the plastid. It localises to the chloroplast. It carries out the reaction 2 (2R)-3-phosphoglycerate + 2 H(+) = D-ribulose 1,5-bisphosphate + CO2 + H2O. It catalyses the reaction D-ribulose 1,5-bisphosphate + O2 = 2-phosphoglycolate + (2R)-3-phosphoglycerate + 2 H(+). Its function is as follows. RuBisCO catalyzes two reactions: the carboxylation of D-ribulose 1,5-bisphosphate, the primary event in carbon dioxide fixation, as well as the oxidative fragmentation of the pentose substrate in the photorespiration process. Both reactions occur simultaneously and in competition at the same active site. In Berzelia lanuginosa (Buttonbush), this protein is Ribulose bisphosphate carboxylase large chain.